The chain runs to 197 residues: MNYSKAKYIMGAAKVSQLPEDTGVEVAFAGRSNAGKSSALNTLTDQKGLARVSKTPGRTQLINLFDLGNNNRLVDLPGYGYAKVSESIKRQWQSEMENYLTSRKCLNGIVLLVDLRHELKEFDSLMIEMAISFDLNLHILLTKADKLNNKERAQANRMIESFLKTFVSTDKISYQLFSSLTKMGLDKFKEKLDTWYQ.

Residues 22–197 form the EngB-type G domain; it reads TGVEVAFAGR…FKEKLDTWYQ (176 aa). Residues 30 to 37, 57 to 61, 75 to 78, 142 to 145, and 177 to 179 each bind GTP; these read GRSNAGKS, GRTQL, DLPG, TKAD, and FSS. Positions 37 and 59 each coordinate Mg(2+).

This sequence belongs to the TRAFAC class TrmE-Era-EngA-EngB-Septin-like GTPase superfamily. EngB GTPase family. Mg(2+) is required as a cofactor.

Necessary for normal cell division and for the maintenance of normal septation. This chain is Probable GTP-binding protein EngB, found in Francisella tularensis subsp. tularensis (strain FSC 198).